A 26-amino-acid polypeptide reads, in one-letter code: Probable early E4 17 kDa protein (26 aa).

The sequence is that of Probable early E4 17 kDa protein from Homo sapiens (Human).